The primary structure comprises 553 residues: HTH-type transcriptional regulator SgrR (553 aa).

The HTH marR-type domain maps to 1–113 (MSTSRLQQQF…RQMLLSQLGR (113 aa)). Positions 26–49 (LQALAEVLNCSRRHVRSLLGKMQH) form a DNA-binding region, H-T-H motif. A solute-binding region spans residues 163–494 (ELEPDLSHHW…EELHQDIESW (332 aa)).

Its function is as follows. Activates the small RNA gene sgrS under glucose-phosphate stress conditions as well as yfdZ. Represses its own transcription under both stress and non-stress conditions. Might act as a sensor of the intracellular accumulation of phosphoglucose by binding these molecules in its C-terminal solute-binding domain. This Yersinia pestis bv. Antiqua (strain Antiqua) protein is HTH-type transcriptional regulator SgrR.